The chain runs to 558 residues: Zinc finger protein piragua (558 aa).

The region spanning serine 15–glutamine 94 is the ZAD domain. Residues cysteine 17, cysteine 20, cysteine 67, and cysteine 70 each coordinate Zn(2+). Residues leucine 132–aspartate 177 show a composition bias toward acidic residues. Positions leucine 132 to methionine 178 are disordered. 9 consecutive C2H2-type zinc fingers follow at residues phenylalanine 208–histidine 231, tyrosine 237–histidine 260, tyrosine 266–histidine 288, phenylalanine 294–histidine 316, phenylalanine 322–histidine 344, phenylalanine 350–histidine 372, tyrosine 414–histidine 436, phenylalanine 441–histidine 464, and phenylalanine 468–histidine 490.

May be involved in transcriptional regulation. The function of this protein is unclear. According to one report, it is required for development and viability since mutants display defects in several developmental morphogenetic processes including dorsal closure and head involution, and die by the first instar larval stage. It may also be involved in fwe-mediated cellular competition. However, according to another report, it is not required for development or viability since mutants have no visible phenotype and are fertile. In Drosophila melanogaster (Fruit fly), this protein is Zinc finger protein piragua.